A 179-amino-acid chain; its full sequence is Nucleoside-triphosphatase THEP1 (179 aa).

ATP-binding positions include 7 to 14 (GMPGVGKT) and 98 to 105 (IIIIDEIG).

This sequence belongs to the THEP1 NTPase family.

The enzyme catalyses a ribonucleoside 5'-triphosphate + H2O = a ribonucleoside 5'-diphosphate + phosphate + H(+). Functionally, has nucleotide phosphatase activity towards ATP, GTP, CTP, TTP and UTP. May hydrolyze nucleoside diphosphates with lower efficiency. The chain is Nucleoside-triphosphatase THEP1 from Pyrococcus abyssi (strain GE5 / Orsay).